The chain runs to 148 residues: uncharacterized protein (148 aa).

A helical transmembrane segment spans residues M1 to F21. A disordered region spans residues A27–T61.

It is found in the host membrane. This is an uncharacterized protein from Frog virus 3 (isolate Goorha) (FV-3).